Reading from the N-terminus, the 261-residue chain is Cytochrome c oxidase subunit 3 (261 aa).

Over 1–15 the chain is Mitochondrial matrix; the sequence is MTHQTHAYHMVNPSP. The chain crosses the membrane as a helical span at residues 16–34; sequence WPLTGALSALLLTSGLMMW. Residues 35 to 40 lie on the Mitochondrial intermembrane side of the membrane; it reads FHFNNP. A helical transmembrane segment spans residues 41-66; sequence TLLVLGLLTNLISSYQWWRDIVREGT. The Mitochondrial matrix segment spans residues 67–72; sequence YQGHHT. A helical membrane pass occupies residues 73–105; it reads KVVQKGLRYGMVLFIISEVFFFLGFFWAFYHSS. The Mitochondrial intermembrane segment spans residues 106 to 128; it reads LAPTPELGGCWPPTGISPLNPLE. The chain crosses the membrane as a helical span at residues 129–152; the sequence is VPLLNTSILLASGVSITWSHHSLM. Over 153 to 155 the chain is Mitochondrial matrix; it reads EGN. The helical transmembrane segment at 156–183 threads the bilayer; it reads RKQMIQALMITIALGLYFTALQAMEYYE. The Mitochondrial intermembrane portion of the chain corresponds to 184–190; sequence SSFTISD. The helical transmembrane segment at 191 to 223 threads the bilayer; sequence GVYGSTFFVATGFHGLHVIIGTTFLITCLLRQL. Topologically, residues 224-232 are mitochondrial matrix; that stretch reads LYHFTSNHH. Residues 233–256 traverse the membrane as a helical segment; it reads FGFEAAAWYWHFVDVVWLFLYVSI. The Mitochondrial intermembrane segment spans residues 257–261; it reads YWWGS.

The protein belongs to the cytochrome c oxidase subunit 3 family. In terms of assembly, component of the cytochrome c oxidase (complex IV, CIV), a multisubunit enzyme composed of 14 subunits. The complex is composed of a catalytic core of 3 subunits MT-CO1, MT-CO2 and MT-CO3, encoded in the mitochondrial DNA, and 11 supernumerary subunits COX4I, COX5A, COX5B, COX6A, COX6B, COX6C, COX7A, COX7B, COX7C, COX8 and NDUFA4, which are encoded in the nuclear genome. The complex exists as a monomer or a dimer and forms supercomplexes (SCs) in the inner mitochondrial membrane with NADH-ubiquinone oxidoreductase (complex I, CI) and ubiquinol-cytochrome c oxidoreductase (cytochrome b-c1 complex, complex III, CIII), resulting in different assemblies (supercomplex SCI(1)III(2)IV(1) and megacomplex MCI(2)III(2)IV(2)).

It is found in the mitochondrion inner membrane. It carries out the reaction 4 Fe(II)-[cytochrome c] + O2 + 8 H(+)(in) = 4 Fe(III)-[cytochrome c] + 2 H2O + 4 H(+)(out). Its function is as follows. Component of the cytochrome c oxidase, the last enzyme in the mitochondrial electron transport chain which drives oxidative phosphorylation. The respiratory chain contains 3 multisubunit complexes succinate dehydrogenase (complex II, CII), ubiquinol-cytochrome c oxidoreductase (cytochrome b-c1 complex, complex III, CIII) and cytochrome c oxidase (complex IV, CIV), that cooperate to transfer electrons derived from NADH and succinate to molecular oxygen, creating an electrochemical gradient over the inner membrane that drives transmembrane transport and the ATP synthase. Cytochrome c oxidase is the component of the respiratory chain that catalyzes the reduction of oxygen to water. Electrons originating from reduced cytochrome c in the intermembrane space (IMS) are transferred via the dinuclear copper A center (CU(A)) of subunit 2 and heme A of subunit 1 to the active site in subunit 1, a binuclear center (BNC) formed by heme A3 and copper B (CU(B)). The BNC reduces molecular oxygen to 2 water molecules using 4 electrons from cytochrome c in the IMS and 4 protons from the mitochondrial matrix. In Tachyglossus aculeatus aculeatus (Southeast Australian short-beaked echidna), this protein is Cytochrome c oxidase subunit 3 (MT-CO3).